A 135-amino-acid chain; its full sequence is MSEFKRLMRLKLKMKQKRPEFKRQDWFKSSRIGTSWRRPFGKHSGMRIGLTHRAAVATVGYRGPALVRGLHPSGLQDILVNNVKELVAINPEIQGARIAATVGKRKRIEIVKKANELGIRVFNVSKQKQEEFLSL.

Belongs to the eukaryotic ribosomal protein eL32 family.

The sequence is that of Large ribosomal subunit protein eL32 from Methanococcus maripaludis (strain C6 / ATCC BAA-1332).